A 418-amino-acid chain; its full sequence is Glutamate dehydrogenase (418 aa).

Residue Lys105 is part of the active site. 217–223 (GYGNVGY) provides a ligand contact to NAD(+).

The protein belongs to the Glu/Leu/Phe/Val dehydrogenases family. In terms of assembly, homohexamer.

It localises to the cytoplasm. The catalysed reaction is L-glutamate + NAD(+) + H2O = 2-oxoglutarate + NH4(+) + NADH + H(+). It carries out the reaction L-glutamate + NADP(+) + H2O = 2-oxoglutarate + NH4(+) + NADPH + H(+). In Aeropyrum pernix (strain ATCC 700893 / DSM 11879 / JCM 9820 / NBRC 100138 / K1), this protein is Glutamate dehydrogenase (gdhA).